The following is a 134-amino-acid chain: Small ribosomal subunit protein uS11 (134 aa).

Belongs to the universal ribosomal protein uS11 family. Part of the 30S ribosomal subunit. Interacts with proteins S7 and S18. Binds to IF-3.

Located on the platform of the 30S subunit, it bridges several disparate RNA helices of the 16S rRNA. Forms part of the Shine-Dalgarno cleft in the 70S ribosome. The chain is Small ribosomal subunit protein uS11 from Paracidovorax citrulli (strain AAC00-1) (Acidovorax citrulli).